We begin with the raw amino-acid sequence, 759 residues long: 1,4-alpha-glucan branching enzyme GlgB (759 aa).

The tract at residues 1–21 (MAKTKGLPKDTAVTPSPHLRP) is disordered. Asp-422 serves as the catalytic Nucleophile. Glu-475 (proton donor) is an active-site residue.

The protein belongs to the glycosyl hydrolase 13 family. GlgB subfamily. Monomer.

It carries out the reaction Transfers a segment of a (1-&gt;4)-alpha-D-glucan chain to a primary hydroxy group in a similar glucan chain.. The protein operates within glycan biosynthesis; glycogen biosynthesis. Functionally, catalyzes the formation of the alpha-1,6-glucosidic linkages in glycogen by scission of a 1,4-alpha-linked oligosaccharide from growing alpha-1,4-glucan chains and the subsequent attachment of the oligosaccharide to the alpha-1,6 position. This chain is 1,4-alpha-glucan branching enzyme GlgB, found in Mycobacterium sp. (strain JLS).